Reading from the N-terminus, the 581-residue chain is MEKVTNSDLKSSVDGGVVDVYGEDSATIEHNITPWSLSVSSGYSLLRDPRYNKGLAFTEKERDTHYLRGLLPPVVLDQKLQEKRLLNNIRQYQFPLQKYMALTELQERNERLFYKLLIDNVEELLPIVYTPTVGEACQKFGSIFRRPQGLFISLKDKGKILDVLKNWPERNIQVIVVTDGERILGLGDLGCQGMGIPVGKLALYSALGGVRPSACLPVTIDVGTNNEKLLNDEFYIGLRQKRATGQEYSELLNEFMSAVKQNYGEKVLIQFEDFANHNAFELLAKYSDTHLVFNDDIQGTASVVLAGLVSAQKLTNSPLAEHTFLFLGAGEAGTGIAELIALYMSKQMNASVEESRKKIWLVDSKGLIVNSRKDSLQDFKKPWAHEHEPVKDLLGAIKAIKPTVLIGSSGVGRSFTKEVIEAMSSINERPLIMALSNPTTQSECTAEEAYTWSKGRAIFASGSPFDPVEYEGKVFVSTQANNAYIFPGFGLGLVISGAIRVHDDMLLAAAEALAGQVSKENYEKGMIYPSFSSIRKISAQIAANVATKAYELGLAGRLPRPKDIVKCAESSMYSPTYRLYR.

Tyrosine 129 serves as the catalytic Proton donor. Residue arginine 182 participates in NADP(+) binding. Lysine 200 serves as the catalytic Proton acceptor. A divalent metal cation is bound by residues glutamate 272, aspartate 273, and aspartate 296. NADP(+)-binding positions include aspartate 296, 325 to 341 (LFLG…ELIA), and asparagine 437.

It belongs to the malic enzymes family. In terms of assembly, homohexamers and homooctamers. The cofactor is Mg(2+). It depends on Mn(2+) as a cofactor. As to expression, specifically expressed in roots (only in steles of secondary roots).

Its subcellular location is the cytoplasm. It catalyses the reaction (S)-malate + NADP(+) = pyruvate + CO2 + NADPH. It carries out the reaction oxaloacetate + H(+) = pyruvate + CO2. The sequence is that of NADP-dependent malic enzyme 1 (NADP-ME1) from Arabidopsis thaliana (Mouse-ear cress).